We begin with the raw amino-acid sequence, 475 residues long: SAM50-like protein SPAC17C9.06 (475 aa).

The 87-residue stretch at 44–130 (VGISSIRVTG…LDVTIQVKEK (87 aa)) folds into the POTRA domain.

Belongs to the SAM50/omp85 family. As to quaternary structure, associates with the mitochondrial contact site and cristae organizing system (MICOS) complex (also known as MINOS or MitOS complex).

Its subcellular location is the mitochondrion outer membrane. Functionally, may be required for the assembly pathway of mitochondrial outer membrane proteins. The chain is SAM50-like protein SPAC17C9.06 from Schizosaccharomyces pombe (strain 972 / ATCC 24843) (Fission yeast).